A 348-amino-acid chain; its full sequence is NADH-ubiquinone oxidoreductase chain 2 (348 aa).

Transmembrane regions (helical) follow at residues 3-23, 25-45, 67-87, 95-115, 118-138, 149-171, 178-198, 203-223, 240-260, 274-294, and 324-344; these read PVVL…TFIG, HWLL…PLMI, SALL…WSLL, ATLV…HFWL, VLQG…KLAP, LNSN…GGLN, ILAY…HYSP, LNLA…KLFN, LSII…LSGF, DLAI…FFYL, and LILM…PTIF.

The protein belongs to the complex I subunit 2 family.

It localises to the mitochondrion inner membrane. The catalysed reaction is a ubiquinone + NADH + 5 H(+)(in) = a ubiquinol + NAD(+) + 4 H(+)(out). Its function is as follows. Core subunit of the mitochondrial membrane respiratory chain NADH dehydrogenase (Complex I) that is believed to belong to the minimal assembly required for catalysis. Complex I functions in the transfer of electrons from NADH to the respiratory chain. The immediate electron acceptor for the enzyme is believed to be ubiquinone. The protein is NADH-ubiquinone oxidoreductase chain 2 (MT-ND2) of Squalus acanthias (Spiny dogfish).